A 128-amino-acid polypeptide reads, in one-letter code: Glycine cleavage system H protein (128 aa).

The Lipoyl-binding domain maps to 22–104 (VATVGITEHA…YGEGWIFKMK (83 aa)). The residue at position 63 (Lys63) is an N6-lipoyllysine.

It belongs to the GcvH family. As to quaternary structure, the glycine cleavage system is composed of four proteins: P, T, L and H. The cofactor is (R)-lipoate.

Functionally, the glycine cleavage system catalyzes the degradation of glycine. The H protein shuttles the methylamine group of glycine from the P protein to the T protein. This chain is Glycine cleavage system H protein, found in Methylacidiphilum infernorum (isolate V4) (Methylokorus infernorum (strain V4)).